The sequence spans 119 residues: Large ribosomal subunit protein uL22 (119 aa).

Belongs to the universal ribosomal protein uL22 family. As to quaternary structure, part of the 50S ribosomal subunit.

This protein binds specifically to 23S rRNA; its binding is stimulated by other ribosomal proteins, e.g. L4, L17, and L20. It is important during the early stages of 50S assembly. It makes multiple contacts with different domains of the 23S rRNA in the assembled 50S subunit and ribosome. Functionally, the globular domain of the protein is located near the polypeptide exit tunnel on the outside of the subunit, while an extended beta-hairpin is found that lines the wall of the exit tunnel in the center of the 70S ribosome. The protein is Large ribosomal subunit protein uL22 of Tropheryma whipplei (strain TW08/27) (Whipple's bacillus).